A 68-amino-acid polypeptide reads, in one-letter code: Small ribosomal subunit protein bS21 (68 aa).

Belongs to the bacterial ribosomal protein bS21 family.

The sequence is that of Small ribosomal subunit protein bS21 from Ruegeria sp. (strain TM1040) (Silicibacter sp.).